The primary structure comprises 355 residues: UDP-N-acetylglucosamine--N-acetylmuramyl-(pentapeptide) pyrophosphoryl-undecaprenol N-acetylglucosamine transferase (355 aa).

Residues 15 to 17 (TGG), asparagine 127, arginine 163, serine 191, isoleucine 244, 263 to 268 (ALTVSE), and glutamine 288 contribute to the UDP-N-acetyl-alpha-D-glucosamine site.

The protein belongs to the glycosyltransferase 28 family. MurG subfamily.

It is found in the cell inner membrane. It catalyses the reaction di-trans,octa-cis-undecaprenyl diphospho-N-acetyl-alpha-D-muramoyl-L-alanyl-D-glutamyl-meso-2,6-diaminopimeloyl-D-alanyl-D-alanine + UDP-N-acetyl-alpha-D-glucosamine = di-trans,octa-cis-undecaprenyl diphospho-[N-acetyl-alpha-D-glucosaminyl-(1-&gt;4)]-N-acetyl-alpha-D-muramoyl-L-alanyl-D-glutamyl-meso-2,6-diaminopimeloyl-D-alanyl-D-alanine + UDP + H(+). It functions in the pathway cell wall biogenesis; peptidoglycan biosynthesis. In terms of biological role, cell wall formation. Catalyzes the transfer of a GlcNAc subunit on undecaprenyl-pyrophosphoryl-MurNAc-pentapeptide (lipid intermediate I) to form undecaprenyl-pyrophosphoryl-MurNAc-(pentapeptide)GlcNAc (lipid intermediate II). The sequence is that of UDP-N-acetylglucosamine--N-acetylmuramyl-(pentapeptide) pyrophosphoryl-undecaprenol N-acetylglucosamine transferase from Salmonella choleraesuis (strain SC-B67).